A 335-amino-acid polypeptide reads, in one-letter code: DNA polymerase beta (335 aa).

Lys41 is covalently cross-linked (Glycyl lysine isopeptide (Lys-Gly) (interchain with G-Cter in ubiquitin)). Lys60 lines the K(+) pocket. Position 60 (Lys60) interacts with Na(+). A Glycyl lysine isopeptide (Lys-Gly) (interchain with G-Cter in ubiquitin) cross-link involves residue Lys61. K(+) contacts are provided by Leu62 and Val65. Positions 62 and 65 each coordinate Na(+). Lys72 acts as the Nucleophile; Schiff-base intermediate with DNA; for 5'-dRP lyase activity in catalysis. Residue Lys72 is modified to N6-acetyllysine. Residue Lys81 forms a Glycyl lysine isopeptide (Lys-Gly) (interchain with G-Cter in ubiquitin) linkage. Arg83 is subject to Omega-N-methylarginine; by PRMT6. K(+) is bound by residues Thr101, Val103, and Ile106. Residues Thr101, Val103, and Ile106 each contribute to the Na(+) site. Arg149 is a dATP binding site. Residue Arg149 participates in dCTP binding. A dGTP-binding site is contributed by Arg149. Arg149 lines the dTTP pocket. Arg152 bears the Omega-N-methylarginine; by PRMT6 mark. Residues Ser180, Arg183, Gly189, and Asp190 each coordinate dATP. Residues Ser180, Arg183, Gly189, and Asp190 each contribute to the dCTP site. Residues Ser180, Arg183, Gly189, Asp190, and Asp192 each contribute to the dGTP site. Positions 180, 183, 189, and 190 each coordinate dTTP. Residues 183–192 (RGAESSGDMD) are DNA-binding. Mg(2+)-binding residues include Asp190, Asp192, and Asp256.

The protein belongs to the DNA polymerase type-X family. In terms of assembly, monomer. Binds single-stranded DNA (ssDNA). Interacts with APEX1, LIG1, LIG3, FEN1, PCNA and XRCC1. Interacts with HUWE1/ARF-BP1, STUB1/CHIP and USP47. Interacts with FAM168A. Mg(2+) is required as a cofactor. Methylation by PRMT6 stimulates the polymerase activity by enhancing DNA binding and processivity. Post-translationally, ubiquitinated at Lys-41, Lys-61 and Lys-81: monoubiquitinated by HUWE1/ARF-BP1. Monoubiquitinated protein is then the target of STUB1/CHIP, which catalyzes polyubiquitination from monoubiquitin, leading to degradation by the proteasome. USP47 mediates the deubiquitination of monoubiquitinated protein, preventing polyubiquitination by STUB1/CHIP and its subsequent degradation.

Its subcellular location is the nucleus. It localises to the cytoplasm. It carries out the reaction DNA(n) + a 2'-deoxyribonucleoside 5'-triphosphate = DNA(n+1) + diphosphate. The catalysed reaction is a 5'-end 2'-deoxyribose-2'-deoxyribonucleotide-DNA = (2E,4S)-4-hydroxypenten-2-al-5-phosphate + a 5'-end 5'-phospho-2'-deoxyribonucleoside-DNA + H(+). The enzyme catalyses 2'-deoxyribonucleotide-(2'-deoxyribose 5'-phosphate)-2'-deoxyribonucleotide-DNA = a 3'-end 2'-deoxyribonucleotide-(2,3-dehydro-2,3-deoxyribose 5'-phosphate)-DNA + a 5'-end 5'-phospho-2'-deoxyribonucleoside-DNA + H(+). Functionally, repair polymerase that plays a key role in base-excision repair. During this process, the damaged base is excised by specific DNA glycosylases, the DNA backbone is nicked at the abasic site by an apurinic/apyrimidic (AP) endonuclease, and POLB removes 5'-deoxyribose-phosphate from the preincised AP site acting as a 5'-deoxyribose-phosphate lyase (5'-dRP lyase); through its DNA polymerase activity, it adds one nucleotide to the 3' end of the arising single-nucleotide gap. Conducts 'gap-filling' DNA synthesis in a stepwise distributive fashion rather than in a processive fashion as for other DNA polymerases. It is also able to cleave sugar-phosphate bonds 3' to an intact AP site, acting as an AP lyase. This chain is DNA polymerase beta (POLB), found in Homo sapiens (Human).